The following is a 361-amino-acid chain: Protein RecA (361 aa).

77 to 84 lines the ATP pocket; it reads GPESSGKT.

It belongs to the RecA family.

It is found in the cytoplasm. Can catalyze the hydrolysis of ATP in the presence of single-stranded DNA, the ATP-dependent uptake of single-stranded DNA by duplex DNA, and the ATP-dependent hybridization of homologous single-stranded DNAs. It interacts with LexA causing its activation and leading to its autocatalytic cleavage. The protein is Protein RecA of Brucella suis (strain ATCC 23445 / NCTC 10510).